We begin with the raw amino-acid sequence, 429 residues long: Hydrogenobyrinate a,c-diamide synthase (429 aa).

A GATase cobBQ-type domain is found at 240 to 429 (RTAVARDVAF…SFMHLIDFSE (190 aa)). Residue C323 is the Nucleophile of the active site.

Belongs to the CobB/CbiA family. The cofactor is Mg(2+).

It catalyses the reaction hydrogenobyrinate + 2 L-glutamine + 2 ATP + 2 H2O = hydrogenobyrinate a,c-diamide + 2 L-glutamate + 2 ADP + 2 phosphate + 2 H(+). It participates in cofactor biosynthesis; adenosylcobalamin biosynthesis; cob(II)yrinate a,c-diamide from precorrin-2 (aerobic route): step 9/10. Functionally, catalyzes the ATP-dependent amidation of the two carboxylate groups at positions a and c of hydrogenobyrinate, using either L-glutamine or ammonia as the nitrogen source. The sequence is that of Hydrogenobyrinate a,c-diamide synthase from Rhizobium meliloti (strain 1021) (Ensifer meliloti).